The following is a 216-amino-acid chain: Large ribosomal subunit protein uL3 (216 aa).

The disordered stretch occupies residues 137 to 158 (GASHGAHKNHRKPGSIGGASTP).

Belongs to the universal ribosomal protein uL3 family. Part of the 50S ribosomal subunit. Forms a cluster with proteins L14 and L19.

One of the primary rRNA binding proteins, it binds directly near the 3'-end of the 23S rRNA, where it nucleates assembly of the 50S subunit. The chain is Large ribosomal subunit protein uL3 from Pseudarthrobacter chlorophenolicus (strain ATCC 700700 / DSM 12829 / CIP 107037 / JCM 12360 / KCTC 9906 / NCIMB 13794 / A6) (Arthrobacter chlorophenolicus).